The following is a 215-amino-acid chain: Ribosomal RNA small subunit methyltransferase G (215 aa).

Residues Gly78, Leu83, 128–129 (AE), and Arg146 contribute to the S-adenosyl-L-methionine site.

This sequence belongs to the methyltransferase superfamily. RNA methyltransferase RsmG family.

It localises to the cytoplasm. The catalysed reaction is guanosine(527) in 16S rRNA + S-adenosyl-L-methionine = N(7)-methylguanosine(527) in 16S rRNA + S-adenosyl-L-homocysteine. Its function is as follows. Specifically methylates the N7 position of guanine in position 527 of 16S rRNA. This chain is Ribosomal RNA small subunit methyltransferase G, found in Anaeromyxobacter dehalogenans (strain 2CP-1 / ATCC BAA-258).